The primary structure comprises 366 residues: Holliday junction branch migration complex subunit RuvB (366 aa).

The segment at 1–50 is disordered; that stretch reads MAIISSKKQPPEPNGEPKQRRESAKAPSTENILKPEAAIDEQEQQEEGIR. Residues 13–210 form a large ATPase domain (RuvB-L) region; that stretch reads PNGEPKQRRE…FGLIQKLRFY (198 aa). Over residues 15-24 the composition is skewed to basic and acidic residues; that stretch reads GEPKQRRESA. ATP is bound by residues I49, R50, G91, K94, T95, T96, 157–159, R200, Y210, and R247; that span reads EDY. T95 contributes to the Mg(2+) binding site. The small ATPAse domain (RuvB-S) stretch occupies residues 211–281; sequence EVDELTQIVL…IASEALQLFQ (71 aa). The segment at 284–366 is head domain (RuvB-H); it reads PCGLDWTDRQ…TPPNEQLSLL (83 aa). Positions 339 and 344 each coordinate DNA.

This sequence belongs to the RuvB family. As to quaternary structure, homohexamer. Forms an RuvA(8)-RuvB(12)-Holliday junction (HJ) complex. HJ DNA is sandwiched between 2 RuvA tetramers; dsDNA enters through RuvA and exits via RuvB. An RuvB hexamer assembles on each DNA strand where it exits the tetramer. Each RuvB hexamer is contacted by two RuvA subunits (via domain III) on 2 adjacent RuvB subunits; this complex drives branch migration. In the full resolvosome a probable DNA-RuvA(4)-RuvB(12)-RuvC(2) complex forms which resolves the HJ.

It is found in the cytoplasm. The catalysed reaction is ATP + H2O = ADP + phosphate + H(+). The RuvA-RuvB-RuvC complex processes Holliday junction (HJ) DNA during genetic recombination and DNA repair, while the RuvA-RuvB complex plays an important role in the rescue of blocked DNA replication forks via replication fork reversal (RFR). RuvA specifically binds to HJ cruciform DNA, conferring on it an open structure. The RuvB hexamer acts as an ATP-dependent pump, pulling dsDNA into and through the RuvAB complex. RuvB forms 2 homohexamers on either side of HJ DNA bound by 1 or 2 RuvA tetramers; 4 subunits per hexamer contact DNA at a time. Coordinated motions by a converter formed by DNA-disengaged RuvB subunits stimulates ATP hydrolysis and nucleotide exchange. Immobilization of the converter enables RuvB to convert the ATP-contained energy into a lever motion, pulling 2 nucleotides of DNA out of the RuvA tetramer per ATP hydrolyzed, thus driving DNA branch migration. The RuvB motors rotate together with the DNA substrate, which together with the progressing nucleotide cycle form the mechanistic basis for DNA recombination by continuous HJ branch migration. Branch migration allows RuvC to scan DNA until it finds its consensus sequence, where it cleaves and resolves cruciform DNA. The chain is Holliday junction branch migration complex subunit RuvB from Nostoc punctiforme (strain ATCC 29133 / PCC 73102).